The primary structure comprises 715 residues: MTCGFSRADRSPYHGPVTSTVARDVSGVRTYQVRTYGCQMNVHDSERLAGLLEAAGYRRAAEGAEVADVVVFNTCAVRENADNKLYGNLSHLAPRKRSNPQMQIAVGGCLAQKDREAVLRRAPWVDVVFGTHNIGSLPTLLERARHNKAAQVEIAEALQQFPSSLPSARESAYAAWVSISVGCNNSCTFCIVPSLRGKEVDRSPDDILAEVRSLVADGVLEVTLLGQNVNAYGVSFADPALPRDRGAFARLLRACGEIDGLERVRFTSPHPAEFTDDVIEAMAQTPNVCPALHMPLQSGSDRVLRAMRRSYRAERYLGIIDRVRAAMPHAAITTDLIVGFPGETEEDFAATLDVVRRARFAAAFTFQYSKRPGTPAAELDGQIPKAVVQERYERLVELQESISLQGNQALVGQTVELLVATGEGRKDSATARMSGRARDGRLVHFAADDRVRPGDLVTTVITGAAPHHLIADAGILSHRRTRAGDAHAPAGARAASVSACPPSGRRRPGPTRWMCLMNDDRNHDDPRLGALRTEIEAAERRVAGGIDPGARGFVVSILVFVLLGSFILPHTGDVRGWDVLFGTHDAGAAAVALPSRVFGWLALVFGVGFSTLALVTRRWALAWIALAGTAIAGAAGMLAIWSRQTVPAGHPGPGWGLIVAWITVLVLIYQWARVVWSRTIVQLAAEEQRRRVAAQQQSTTLLDDLPKPEDPAAGT.

The (Dimethylallyl)adenosine tRNA methylthiotransferase MiaB stretch occupies residues 1-516 (MTCGFSRADR…RPGPTRWMCL (516 aa)). The region spanning 29–146 (RTYQVRTYGC…LPTLLERARH (118 aa)) is the MTTase N-terminal domain. 6 residues coordinate [4Fe-4S] cluster: Cys38, Cys75, Cys109, Cys183, Cys187, and Cys190. The Radical SAM core domain maps to 169-405 (RESAYAAWVS…VELQESISLQ (237 aa)). Positions 408–475 (QALVGQTVEL…PHHLIADAGI (68 aa)) constitute a TRAM domain. Residues 517 to 715 (MNDDRNHDDP…PKPEDPAAGT (199 aa)) are unknown. 4 helical membrane passes run 552-572 (GFVV…PHTG), 589-609 (AAVA…GVGF), 621-641 (LAWI…LAIW), and 652-672 (GPGW…YQWA).

It in the N-terminal section; belongs to the methylthiotransferase family. MiaB subfamily. In terms of assembly, monomer. The cofactor is [4Fe-4S] cluster.

The protein localises to the cell membrane. It catalyses the reaction N(6)-dimethylallyladenosine(37) in tRNA + (sulfur carrier)-SH + AH2 + 2 S-adenosyl-L-methionine = 2-methylsulfanyl-N(6)-dimethylallyladenosine(37) in tRNA + (sulfur carrier)-H + 5'-deoxyadenosine + L-methionine + A + S-adenosyl-L-homocysteine + 2 H(+). Catalyzes the methylthiolation of N6-(dimethylallyl)adenosine (i(6)A), leading to the formation of 2-methylthio-N6-(dimethylallyl)adenosine (ms(2)i(6)A) at position 37 in tRNAs that read codons beginning with uridine. The chain is tRNA-2-methylthio-N(6)-dimethylallyladenosine synthase (miaB) from Mycobacterium avium (strain 104).